The chain runs to 464 residues: ATP synthase subunit beta (464 aa).

152–159 (GGAGVGKS) contacts ATP.

The protein belongs to the ATPase alpha/beta chains family. As to quaternary structure, F-type ATPases have 2 components, CF(1) - the catalytic core - and CF(0) - the membrane proton channel. CF(1) has five subunits: alpha(3), beta(3), gamma(1), delta(1), epsilon(1). CF(0) has three main subunits: a(1), b(2) and c(9-12). The alpha and beta chains form an alternating ring which encloses part of the gamma chain. CF(1) is attached to CF(0) by a central stalk formed by the gamma and epsilon chains, while a peripheral stalk is formed by the delta and b chains.

Its subcellular location is the cell membrane. The enzyme catalyses ATP + H2O + 4 H(+)(in) = ADP + phosphate + 5 H(+)(out). Functionally, produces ATP from ADP in the presence of a proton gradient across the membrane. The catalytic sites are hosted primarily by the beta subunits. The sequence is that of ATP synthase subunit beta from Protochlamydia amoebophila (strain UWE25).